A 303-amino-acid chain; its full sequence is MNTLEQTIGNTPLVKLQRLGPDNGSEIWVKLEGNNPAGSVKDRAALSMIVEAEKRGEIKPGDVLIEATSGNTGIALAMIAALKGYRMKLLMPDNMSQERRAAMRAYGAELILVTKEQGMEGARDLALAMSERGEGKLLDQFNNPDNPYAHYTTTGPEIWRQTSGRITHFVSSMGTTGTITGVSRFLREQEKPVTIVGLQPEEGSSIPGIRRWPAEYMPGIFNASLVDEVLDIHQNDAENTMRELAVREGIFCGVSSGGAVAGALRVARATPGAIVVAIICDRGDRYLSTGVFGEEHFSQGAGI.

At Lys41 the chain carries N6-(pyridoxal phosphate)lysine. Pyridoxal 5'-phosphate is bound by residues Asn71, 174-178 (GTTGT), and Ser255.

Belongs to the cysteine synthase/cystathionine beta-synthase family. The cofactor is pyridoxal 5'-phosphate.

It catalyses the reaction O-acetyl-L-serine + hydrogen sulfide = L-cysteine + acetate. Its pathway is amino-acid biosynthesis; L-cysteine biosynthesis; L-cysteine from L-serine: step 2/2. In terms of biological role, two cysteine synthase enzymes are found. Both catalyze the same reaction. Cysteine synthase B can also use thiosulfate in place of sulfide to give cysteine thiosulfonate as a product. The chain is Cysteine synthase B (cysM) from Salmonella typhimurium (strain LT2 / SGSC1412 / ATCC 700720).